A 406-amino-acid polypeptide reads, in one-letter code: Vitamin D3 dihydroxylase (406 aa).

Over residues 1-15 the composition is skewed to low complexity; that stretch reads MTDTATTPQTTDAPA. The disordered stretch occupies residues 1–24; the sequence is MTDTATTPQTTDAPAFPSNRSCPY. Thr81 provides a ligand contact to calciol. Heme contacts are provided by His103 and Arg107. Calciol contacts are provided by Arg193, Ser236, and Ile293. Heme contacts are provided by Arg297, His353, and Cys355.

Belongs to the cytochrome P450 family. The cofactor is heme.

The protein resides in the cytoplasm. It carries out the reaction calciol + 2 reduced [2Fe-2S]-[ferredoxin] + O2 + 2 H(+) = calcidiol + 2 oxidized [2Fe-2S]-[ferredoxin] + H2O. The enzyme catalyses calcidiol + 2 reduced [2Fe-2S]-[ferredoxin] + O2 + 2 H(+) = calcitriol + 2 oxidized [2Fe-2S]-[ferredoxin] + H2O. Functionally, involved in the metabolism of vitamin D3 (calciol) and of a number of sulfonylurea herbicides. Catalyzes the two-step hydroxylation (25- and 1-alpha-hydroxylation) of vitamin D3 (VD3) to yield its active form 1-alpha,25-dihydroxyvitamin D3 (calcitriol). The first step is the hydroxylation of the C-25 position of VD3 to produce 25-hydroxyvitamin D3 (calcidiol). The second reaction is the hydroxylation of the C1-alpha-position of calcidiol to produce calcitriol. It can also hydroxylate vitamin D2. The protein is Vitamin D3 dihydroxylase of Streptomyces griseolus.